A 144-amino-acid polypeptide reads, in one-letter code: MRLNTLSPADGSKHAPKRLGRGIGSGLGKTGGRGHKGQNSRSGGGVRRGFEGGQMPLYRRLPKFGFTSRKAMVTAEVRLSDLAKVEGGIVDLNTLKAANIIGIQMEFAKVILSGEVSAPVTIRGLRVTKGARAAIEAAGGKIEE.

Residues 1–53 are disordered; it reads MRLNTLSPADGSKHAPKRLGRGIGSGLGKTGGRGHKGQNSRSGGGVRRGFEGG. Over residues 21–31 the composition is skewed to gly residues; it reads RGIGSGLGKTG.

The protein belongs to the universal ribosomal protein uL15 family. In terms of assembly, part of the 50S ribosomal subunit.

Functionally, binds to the 23S rRNA. This Erwinia tasmaniensis (strain DSM 17950 / CFBP 7177 / CIP 109463 / NCPPB 4357 / Et1/99) protein is Large ribosomal subunit protein uL15.